Here is a 211-residue protein sequence, read N- to C-terminus: Small ribosomal subunit protein eS1 (211 aa).

Belongs to the eukaryotic ribosomal protein eS1 family.

The chain is Small ribosomal subunit protein eS1 from Methanothrix thermoacetophila (strain DSM 6194 / JCM 14653 / NBRC 101360 / PT) (Methanosaeta thermophila).